The primary structure comprises 341 residues: Protein-glutamate methylesterase/protein-glutamine glutaminase 1 (341 aa).

Positions 2-119 constitute a Response regulatory domain; the sequence is KVGIVNDSAL…SDAKLTAGPL (118 aa). A 4-aspartylphosphate modification is found at D53. In terms of domain architecture, CheB-type methylesterase spans 146–331; the sequence is TLAASRLVAI…LTAIAPRLVQ (186 aa). Active-site residues include S158, H185, and D278.

It belongs to the CheB family. Phosphorylated by CheA. Phosphorylation of the N-terminal regulatory domain activates the methylesterase activity.

It is found in the cytoplasm. The enzyme catalyses [protein]-L-glutamate 5-O-methyl ester + H2O = L-glutamyl-[protein] + methanol + H(+). The catalysed reaction is L-glutaminyl-[protein] + H2O = L-glutamyl-[protein] + NH4(+). Involved in chemotaxis. Part of a chemotaxis signal transduction system that modulates chemotaxis in response to various stimuli. Catalyzes the demethylation of specific methylglutamate residues introduced into the chemoreceptors (methyl-accepting chemotaxis proteins or MCP) by CheR. Also mediates the irreversible deamidation of specific glutamine residues to glutamic acid. This Cupriavidus pinatubonensis (strain JMP 134 / LMG 1197) (Cupriavidus necator (strain JMP 134)) protein is Protein-glutamate methylesterase/protein-glutamine glutaminase 1.